We begin with the raw amino-acid sequence, 469 residues long: Glutamate--tRNA ligase (469 aa).

The 'HIGH' region signature appears at 8–18; sequence PSPTGFLHVGG. The Zn(2+) site is built by cysteine 97, cysteine 99, cysteine 124, and aspartate 126. Residues 236-240 carry the 'KMSKS' region motif; the sequence is KLSKR. Position 239 (lysine 239) interacts with ATP.

It belongs to the class-I aminoacyl-tRNA synthetase family. Glutamate--tRNA ligase type 1 subfamily. As to quaternary structure, monomer. It depends on Zn(2+) as a cofactor.

Its subcellular location is the cytoplasm. The catalysed reaction is tRNA(Glu) + L-glutamate + ATP = L-glutamyl-tRNA(Glu) + AMP + diphosphate. Functionally, catalyzes the attachment of glutamate to tRNA(Glu) in a two-step reaction: glutamate is first activated by ATP to form Glu-AMP and then transferred to the acceptor end of tRNA(Glu). This is Glutamate--tRNA ligase from Francisella philomiragia subsp. philomiragia (strain ATCC 25017 / CCUG 19701 / FSC 153 / O#319-036).